The primary structure comprises 60 residues: Potassium channel toxin ImKTx88 (60 aa).

Residues 1–22 (MSNFSVFLIALLFCSVFILSEA) form the signal peptide. Cystine bridges form between cysteine 30-cysteine 51, cysteine 36-cysteine 56, and cysteine 40-cysteine 58.

Belongs to the short scorpion toxin superfamily. Potassium channel inhibitor family. In terms of tissue distribution, expressed by the venom gland.

The protein resides in the secreted. Its function is as follows. Recombinant toxin selectively inhibits Kv1.3/KCNA3 potassium channels with an IC(50) of 91 pM. The sequence is that of Potassium channel toxin ImKTx88 from Isometrus maculatus (Lesser brown scorpion).